We begin with the raw amino-acid sequence, 593 residues long: Mitoguardin 2 (593 aa).

Helical transmembrane passes span 11-31 (MIQA…TTFG) and 42-62 (PGLR…ALAA). 2 disordered regions span residues 101–134 (KKGY…HSGS) and 195–228 (LSVG…EPES). The span at 107 to 123 (RRVQSPSSKSNDTLSGI) shows a compositional bias: polar residues. Residues 124 to 134 (SSIEPSKHSGS) are compositionally biased toward low complexity. At Ser132 the chain carries Phosphoserine. Phosphothreonine is present on Thr206. Residues Ser220, Ser224, and Ser228 each carry the phosphoserine modification. Thr273 is subject to Phosphothreonine. Ser276 and Ser295 each carry phosphoserine. The FFAT motif lies at 292-298 (SFFSATE). A helical membrane pass occupies residues 563-583 (ILLGYLGVPAASSIGLNGVLP).

It belongs to the mitoguardin family. As to quaternary structure, homodimer and heterodimer; forms heterodimers with MIGA1. Interacts with PLD6/MitoPLD. Interacts (via phosphorylated FFAT motif) with MOSPD2. In terms of processing, phosphorylation at Ser-295 of the FFAT motif activates interaction with MOSPD2.

The protein resides in the mitochondrion outer membrane. In terms of biological role, regulator of mitochondrial fusion: acts by forming homo- and heterodimers at the mitochondrial outer membrane and facilitating the formation of PLD6/MitoPLD dimers. May act by regulating phospholipid metabolism via PLD6/MitoPLD. The polypeptide is Mitoguardin 2 (Bos taurus (Bovine)).